The primary structure comprises 206 residues: Bacteriochlorophyll synthase 23 kDa chain (206 aa).

It participates in porphyrin-containing compound metabolism; bacteriochlorophyll biosynthesis (light-independent). This chain is Bacteriochlorophyll synthase 23 kDa chain (bchJ), found in Cereibacter sphaeroides (strain ATCC 17023 / DSM 158 / JCM 6121 / CCUG 31486 / LMG 2827 / NBRC 12203 / NCIMB 8253 / ATH 2.4.1.) (Rhodobacter sphaeroides).